Reading from the N-terminus, the 310-residue chain is Putative sugar kinase PH1459 (310 aa).

The ATP site is built by K194, T219, and G224.

The protein belongs to the carbohydrate kinase PfkB family.

In Pyrococcus horikoshii (strain ATCC 700860 / DSM 12428 / JCM 9974 / NBRC 100139 / OT-3), this protein is Putative sugar kinase PH1459.